The chain runs to 923 residues: RNA polymerase-associated protein RapA (923 aa).

Positions 162–332 constitute a Helicase ATP-binding domain; that stretch reads EVGNRVNPRV…FARLRLLDPE (171 aa). 175–182 is an ATP binding site; that stretch reads DEVGLGKT. A DEAH box motif is present at residues 278-281; that stretch reads DEAH. The region spanning 443–597 is the Helicase C-terminal domain; sequence KIDWLIDFLK…TCPMGMALFS (155 aa).

This sequence belongs to the SNF2/RAD54 helicase family. RapA subfamily. As to quaternary structure, interacts with the RNAP. Has a higher affinity for the core RNAP than for the holoenzyme. Its ATPase activity is stimulated by binding to RNAP.

In terms of biological role, transcription regulator that activates transcription by stimulating RNA polymerase (RNAP) recycling in case of stress conditions such as supercoiled DNA or high salt concentrations. Probably acts by releasing the RNAP, when it is trapped or immobilized on tightly supercoiled DNA. Does not activate transcription on linear DNA. Probably not involved in DNA repair. The protein is RNA polymerase-associated protein RapA of Haemophilus influenzae (strain ATCC 51907 / DSM 11121 / KW20 / Rd).